The primary structure comprises 172 residues: Large ribosomal subunit protein uL10 (172 aa).

Belongs to the universal ribosomal protein uL10 family. Part of the ribosomal stalk of the 50S ribosomal subunit. The N-terminus interacts with L11 and the large rRNA to form the base of the stalk. The C-terminus forms an elongated spine to which L12 dimers bind in a sequential fashion forming a multimeric L10(L12)X complex.

In terms of biological role, forms part of the ribosomal stalk, playing a central role in the interaction of the ribosome with GTP-bound translation factors. In Nitrobacter winogradskyi (strain ATCC 25391 / DSM 10237 / CIP 104748 / NCIMB 11846 / Nb-255), this protein is Large ribosomal subunit protein uL10.